Here is a 425-residue protein sequence, read N- to C-terminus: tRNA(Ile)-lysidine synthase (425 aa).

Residue 37–42 participates in ATP binding; the sequence is SGGKDS.

It belongs to the tRNA(Ile)-lysidine synthase family.

It localises to the cytoplasm. It carries out the reaction cytidine(34) in tRNA(Ile2) + L-lysine + ATP = lysidine(34) in tRNA(Ile2) + AMP + diphosphate + H(+). Ligates lysine onto the cytidine present at position 34 of the AUA codon-specific tRNA(Ile) that contains the anticodon CAU, in an ATP-dependent manner. Cytidine is converted to lysidine, thus changing the amino acid specificity of the tRNA from methionine to isoleucine. This chain is tRNA(Ile)-lysidine synthase, found in Leptospira borgpetersenii serovar Hardjo-bovis (strain JB197).